Consider the following 299-residue polypeptide: T-lymphocyte activation antigen CD80 (299 aa).

An N-terminal signal peptide occupies residues 1-32 (MGHTLRPGTPLPRCLHLKLCLLLALAGLHFSS). The 99-residue stretch at 33 to 131 (GISQVTKSVK…NGSFRREHLT (99 aa)) folds into the Ig-like V-type domain. At 33–243 (GISQVTKSVK…KQEPPIDQLP (211 aa)) the chain is on the extracellular side. A disulfide bridge connects residues Cys49 and Cys115. 7 N-linked (GlcNAc...) asparagine glycosylation sites follow: Asn52, Asn88, Asn97, Asn122, Asn185, Asn206, and Asn210. Residues 144–225 (PSITDIGHPD…LIKYGELSVS (82 aa)) enclose the Ig-like C2-type domain. A disulfide bridge connects residues Cys161 and Cys215. Residues 244-264 (FWVIIPVSGALVLTAVVLYCL) traverse the membrane as a helical segment. Topologically, residues 265–299 (ACRHVARWKRTRRNEETVGTERLSPIYLGSAQSSG) are cytoplasmic.

Homodimer. Interacts with CTLA4; this interaction inhibits T-cell activation. Interacts with PDL1/CD274; this interaction blocks PDL1/PDCD1 binding and thus PDL1/CD274 inhibitory function. Interacts with CD28.

The protein resides in the cell membrane. In terms of biological role, costimulatory molecule that belongs to the immunoglobulin superfamily that plays an important role in T-lymphocyte activation. Acts as the primary auxiliary signal augmenting the MHC/TCR signal in naive T-cells together with the CD28 receptor which is constitutively expressed on the cell surface of T-cells. In turn, activates different signaling pathways such as NF-kappa-B or MAPK leading to the production of different cytokines. In addition, CD28/CD80 costimulatory signal stimulates glucose metabolism and ATP synthesis of T-cells by activating the PI3K/Akt signaling pathway. Also acts as a regulator of PDL1/PDCD1 interactions to limit excess engagement of PDL1 and its inhibitory role in immune responses. Expressed on B-cells, plays a critical role in regulating interactions between B-cells and T-cells in both early and late germinal center responses, which are crucial for the generation of effective humoral immune responses. This chain is T-lymphocyte activation antigen CD80 (CD80), found in Oryctolagus cuniculus (Rabbit).